The primary structure comprises 164 residues: PTS system sorbose-specific EIIB component (164 aa).

The 164-residue stretch at Met-1–Glu-164 folds into the PTS EIIB type-4 domain. His-14 serves as the catalytic Pros-phosphohistidine intermediate. At His-14 the chain carries Phosphohistidine; by EIIA.

In terms of assembly, dimer of dimers.

It localises to the cytoplasm. The enzyme catalyses keto-L-sorbose(out) + N(pros)-phospho-L-histidyl-[protein] = L-sorbose 1-phosphate(in) + L-histidyl-[protein]. In terms of biological role, the phosphoenolpyruvate-dependent sugar phosphotransferase system (PTS), a major carbohydrate active transport system, catalyzes the phosphorylation of incoming sugar substrates concomitant with their translocation across the cell membrane. The enzyme II SorABFM PTS system is involved in L-sorbose transport. This Klebsiella pneumoniae protein is PTS system sorbose-specific EIIB component.